The chain runs to 89 residues: Protein S100-A6 (89 aa).

EF-hand domains lie at 12–47 (LVAI…IGAK) and 48–83 (LQDA…LALI). Ca(2+)-binding residues include Thr28 and Glu33. An N6-acetyllysine modification is found at Lys40. Residue Lys47 is modified to N6-acetyllysine; alternate. Lys47 is subject to N6-succinyllysine; alternate. Residues Asp61, Asn63, Asp65, Glu67, and Glu72 each contribute to the Ca(2+) site.

Belongs to the S-100 family. In terms of assembly, homodimer; head to tail assembly of 2 subunits. Interacts with CACYBP in a calcium-dependent manner. Interacts with ANXA2 and ANXA11 (via N-terminus). Interacts with SUGT1. Interacts with TP53; has higher affinity for TP53 that is phosphorylated on its N-terminal domain, and lower affinity for TP53 that is phosphorylated on its C-terminal domain. Interacts with tropomyosin. Interacts with FKBP4. Interacts with PPP5C (via TPR repeats); the interaction is calcium-dependent and modulates PPP5C activity. Interacts with TPPP; this interaction inhibits TPPP dimerization.

Its subcellular location is the nucleus envelope. The protein resides in the cytoplasm. It is found in the cell membrane. Its function is as follows. May function as calcium sensor and modulator, contributing to cellular calcium signaling. May function by interacting with other proteins, such as TPR-containing proteins, and indirectly play a role in many physiological processes such as the reorganization of the actin cytoskeleton and in cell motility. Binds 2 calcium ions. Calcium binding is cooperative. This chain is Protein S100-A6 (S100a6), found in Rattus norvegicus (Rat).